A 142-amino-acid polypeptide reads, in one-letter code: Glia maturation factor beta (142 aa).

Ser-2 carries the post-translational modification N-acetylserine. The ADF-H domain maps to 4–139 (SLVVCDVAED…TEEWLREKLG (136 aa)).

Belongs to the actin-binding proteins ADF family. GMF subfamily. Phosphorylated; stimulated by phorbol ester.

Functionally, this protein causes differentiation of brain cells, stimulation of neural regeneration, and inhibition of proliferation of tumor cells. The polypeptide is Glia maturation factor beta (GMFB) (Homo sapiens (Human)).